Consider the following 128-residue polypeptide: NADPH-dependent 7-cyano-7-deazaguanine reductase (128 aa).

Cysteine 34 serves as the catalytic Thioimide intermediate. Aspartate 41 (proton donor) is an active-site residue. Residues 56–58 (VEL) and 75–76 (HE) each bind substrate.

The protein belongs to the GTP cyclohydrolase I family. QueF type 1 subfamily.

It is found in the cytoplasm. The enzyme catalyses 7-aminomethyl-7-carbaguanine + 2 NADP(+) = 7-cyano-7-deazaguanine + 2 NADPH + 3 H(+). The protein operates within tRNA modification; tRNA-queuosine biosynthesis. Functionally, catalyzes the NADPH-dependent reduction of 7-cyano-7-deazaguanine (preQ0) to 7-aminomethyl-7-deazaguanine (preQ1). The protein is NADPH-dependent 7-cyano-7-deazaguanine reductase of Thermomicrobium roseum (strain ATCC 27502 / DSM 5159 / P-2).